The sequence spans 220 residues: Large ribosomal subunit protein bL9 (220 aa).

Low complexity predominate over residues 167–184 (AAAEVEQAEDVAAAEQQD). Residues 167-220 (AAAEVEQAEDVAAAEQQDSSPVDDHADDADGATGGEGRDEGAGDASDGEEMPST) are disordered.

Belongs to the bacterial ribosomal protein bL9 family.

Functionally, binds to the 23S rRNA. The polypeptide is Large ribosomal subunit protein bL9 (Anaplasma marginale (strain St. Maries)).